A 423-amino-acid polypeptide reads, in one-letter code: COP9 signalosome complex subunit 3 (423 aa).

A PCI domain is found at 197–365 (NFERAMYFYE…GMVCFHDSPE (169 aa)). Polar residues predominate over residues 401-410 (PQFVQKSMGS). Residues 401-423 (PQFVQKSMGSQEDDSGSKPSSYS) are disordered.

It belongs to the CSN3 family. As to quaternary structure, component of the CSN complex, probably composed of cops1, cops2, cops3, cops4, cops5, cops6, cops7, cops8 and cops9.

It localises to the cytoplasm. The protein localises to the nucleus. Component of the COP9 signalosome complex (CSN), a complex involved in various cellular and developmental processes. The CSN complex is an essential regulator of the ubiquitin (Ubl) conjugation pathway by mediating the deneddylation of the cullin subunits of E3 ligase complexes, leading to modify the Ubl ligase activity. This is COP9 signalosome complex subunit 3 (cops3) from Xenopus laevis (African clawed frog).